Here is a 158-residue protein sequence, read N- to C-terminus: NAD(P)H-quinone oxidoreductase subunit J, chloroplastic (158 aa).

Belongs to the complex I 30 kDa subunit family. NDH is composed of at least 16 different subunits, 5 of which are encoded in the nucleus.

The protein resides in the plastid. It is found in the chloroplast thylakoid membrane. It catalyses the reaction a plastoquinone + NADH + (n+1) H(+)(in) = a plastoquinol + NAD(+) + n H(+)(out). It carries out the reaction a plastoquinone + NADPH + (n+1) H(+)(in) = a plastoquinol + NADP(+) + n H(+)(out). Functionally, NDH shuttles electrons from NAD(P)H:plastoquinone, via FMN and iron-sulfur (Fe-S) centers, to quinones in the photosynthetic chain and possibly in a chloroplast respiratory chain. The immediate electron acceptor for the enzyme in this species is believed to be plastoquinone. Couples the redox reaction to proton translocation, and thus conserves the redox energy in a proton gradient. The sequence is that of NAD(P)H-quinone oxidoreductase subunit J, chloroplastic from Citrus sinensis (Sweet orange).